Reading from the N-terminus, the 432-residue chain is Anaerobic glycerol-3-phosphate dehydrogenase subunit B (432 aa).

The protein belongs to the anaerobic G-3-P dehydrogenase subunit B family. Composed of a catalytic GlpA/B dimer and of membrane bound GlpC. The cofactor is FMN.

The enzyme catalyses a quinone + sn-glycerol 3-phosphate = dihydroxyacetone phosphate + a quinol. Its pathway is polyol metabolism; glycerol degradation via glycerol kinase pathway; glycerone phosphate from sn-glycerol 3-phosphate (anaerobic route): step 1/1. Conversion of glycerol 3-phosphate to dihydroxyacetone. Uses fumarate or nitrate as electron acceptor. This Histophilus somni (strain 129Pt) (Haemophilus somnus) protein is Anaerobic glycerol-3-phosphate dehydrogenase subunit B.